Reading from the N-terminus, the 915-residue chain is Probable serine/threonine-protein kinase dyrk2 (915 aa).

4 stretches are compositionally biased toward low complexity: residues 51–79 (TSNT…PTIS), 108–119 (SSSKSSSNSSSI), 170–185 (SSSS…STTS), and 196–218 (SSNS…SGSS). Disordered stretches follow at residues 51–119 (TSNT…SSSI), 132–334 (FSSS…SKSS), and 349–533 (AIKS…PTKS). A compositionally biased stretch (polar residues) spans 234–260 (PSHTISDSPRSSTMKSRSVSISNGSLF). 6 stretches are compositionally biased toward low complexity: residues 261-287 (SPTN…SSIS), 300-333 (SSST…PSKS), 352-364 (SRSL…LARV), 379-391 (SSSS…SFSS), 399-425 (SSSK…ASKI), and 433-533 (SLSS…PTKS). In terms of domain architecture, Protein kinase spans 605–902 (FEIVSILGQG…AEQGLKHDWI (298 aa)). ATP is bound by residues 611–619 (LGQGSFCQV) and K634. Catalysis depends on D731, which acts as the Proton acceptor.

This sequence belongs to the protein kinase superfamily. CMGC Ser/Thr protein kinase family. MNB/DYRK subfamily.

The catalysed reaction is L-seryl-[protein] + ATP = O-phospho-L-seryl-[protein] + ADP + H(+). It carries out the reaction L-threonyl-[protein] + ATP = O-phospho-L-threonyl-[protein] + ADP + H(+). The enzyme catalyses L-tyrosyl-[protein] + ATP = O-phospho-L-tyrosyl-[protein] + ADP + H(+). This chain is Probable serine/threonine-protein kinase dyrk2 (dyrk2), found in Dictyostelium discoideum (Social amoeba).